The primary structure comprises 690 residues: NF-kappa-B-repressing factor (690 aa).

Residues 1–296 are active repression domain; that stretch reads MEKILQMAEG…FKHTFGEDLV (296 aa). Residues 25 to 45 carry the Nuclear localization signal motif; that stretch reads KPSKGQKRHLSTCDGQNPPKK. Disordered regions lie at residues 27–87 and 132–163; these read SKGQ…NEQT and MYFD…QTFP. Residue Lys-68 forms a Glycyl lysine isopeptide (Lys-Gly) (interchain with G-Cter in SUMO2) linkage. The segment covering 142–163 has biased composition (low complexity); it reads STTSQQANSQSTPEPSPSQTFP. The DNA-binding element occupies 296–388; it reads VVCQIGMSSY…RVFLQDHCLA (93 aa). A compositionally biased stretch (polar residues) spans 414–431; that stretch reads PTYPSVKSSQCHTGSSPR. The segment at 414-437 is disordered; it reads PTYPSVKSSQCHTGSSPRGSGKKK. Residue Lys-500 forms a Glycyl lysine isopeptide (Lys-Gly) (interchain with G-Cter in SUMO2) linkage. In terms of domain architecture, G-patch spans 551–596; sequence EDNIGNQLLRKMGWTGGGLGKSGEGIREPISVKEQHKREGLGLDVE. The R3H domain occupies 600–664; that stretch reads KIAKRDIEQI…DRYLVVGRKR (65 aa). A Phosphoserine modification is found at Ser-618. Glycyl lysine isopeptide (Lys-Gly) (interchain with G-Cter in SUMO2) cross-links involve residues Lys-666 and Lys-674.

Interacts with NF-kappa-B. Interacts with XRN2. Interacts (via G-patch domain) with DHX15; promoting the RNA helicase activity of DHX15. In terms of tissue distribution, widely and constitutively expressed. Expressed at lower level in colon, peripheral blood lymphocytes, lung and kidney.

The protein localises to the nucleus. Its subcellular location is the nucleolus. Its function is as follows. Enhances the ATPase activity of DHX15 by acting like a brace that tethers mobile sections of DHX15 together, stabilizing a functional conformation with high RNA affinity of DHX15. Involved in the constitutive silencing of the interferon beta promoter, independently of the virus-induced signals, and in the inhibition of the basal and cytokine-induced iNOS promoter activity. Also involved in the regulation of IL-8 transcription. May also act as a DNA-binding transcription regulator: interacts with a specific negative regulatory element (NRE) 5'-AATTCCTCTGA-3' to mediate transcriptional repression of certain NK-kappa-B responsive genes. The chain is NF-kappa-B-repressing factor from Homo sapiens (Human).